The sequence spans 117 residues: Transcription elongation factor A protein-like 8 (117 aa).

Basic and acidic residues-rich tracts occupy residues 1 to 24 (MQKS…DRPL) and 61 to 74 (YKED…DPEE). The segment at 1 to 74 (MQKSCGENER…SPVRHLDPEE (74 aa)) is disordered. Positions 73–100 (EEMIRGADELERLREEIRRVRNKFVMMH) form a coiled coil.

Belongs to the TFS-II family. TFA subfamily.

The protein resides in the nucleus. Functionally, may be involved in transcriptional regulation. The chain is Transcription elongation factor A protein-like 8 (TCEAL8) from Bos taurus (Bovine).